The sequence spans 123 residues: Large ribosomal subunit protein uL24 (123 aa).

Belongs to the universal ribosomal protein uL24 family. As to quaternary structure, part of the 50S ribosomal subunit.

Functionally, one of two assembly initiator proteins, it binds directly to the 5'-end of the 23S rRNA, where it nucleates assembly of the 50S subunit. Located at the polypeptide exit tunnel on the outside of the subunit. In Methanocella arvoryzae (strain DSM 22066 / NBRC 105507 / MRE50), this protein is Large ribosomal subunit protein uL24.